The sequence spans 428 residues: Adenylosuccinate synthetase (428 aa).

Residues glycine 12 to lysine 18 and glycine 40 to threonine 42 contribute to the GTP site. Aspartate 13 functions as the Proton acceptor in the catalytic mechanism. The Mg(2+) site is built by aspartate 13 and glycine 40. IMP is bound by residues aspartate 13–lysine 16, asparagine 38–histidine 41, threonine 128, arginine 142, glutamine 223, threonine 238, and arginine 302. The active-site Proton donor is histidine 41. Residue threonine 298–arginine 304 participates in substrate binding. Residues arginine 304, serine 330–aspartate 332, and serine 412–glycine 414 contribute to the GTP site.

This sequence belongs to the adenylosuccinate synthetase family. In terms of assembly, homodimer. Mg(2+) is required as a cofactor.

Its subcellular location is the cytoplasm. It carries out the reaction IMP + L-aspartate + GTP = N(6)-(1,2-dicarboxyethyl)-AMP + GDP + phosphate + 2 H(+). It participates in purine metabolism; AMP biosynthesis via de novo pathway; AMP from IMP: step 1/2. In terms of biological role, plays an important role in the de novo pathway of purine nucleotide biosynthesis. Catalyzes the first committed step in the biosynthesis of AMP from IMP. The protein is Adenylosuccinate synthetase of Geobacillus kaustophilus (strain HTA426).